The primary structure comprises 234 residues: Zinc finger FYVE domain-containing protein 21 (234 aa).

The FYVE-type zinc finger occupies 44–104 (DKECPRCMQC…QCADCALVSH (61 aa)). Residues C50, C53, C66, C69, C74, C77, C96, and C99 each contribute to the Zn(2+) site. The interval 107–234 (AEFYDKQLKV…TKLLYESRDQ (128 aa)) is PH-like.

As to quaternary structure, interacts with PTK2/FAK1. Widely expressed.

It is found in the cell junction. The protein localises to the focal adhesion. Its subcellular location is the cytoplasmic vesicle. It localises to the endosome. In terms of biological role, plays a role in cell adhesion, and thereby in cell motility which requires repeated formation and disassembly of focal adhesions. Regulates microtubule-induced PTK2/FAK1 dephosphorylation, an event important for focal adhesion disassembly, as well as integrin beta-1/ITGB1 cell surface expression. The protein is Zinc finger FYVE domain-containing protein 21 (Zfyve21) of Mus musculus (Mouse).